The primary structure comprises 255 residues: Geranylgeranylglyceryl phosphate synthase (255 aa).

Aspartate 25 and serine 54 together coordinate Mg(2+). Residues 173–179 (YLEGGSG), 203–204 (GG), and 225–226 (GT) contribute to the sn-glycerol 1-phosphate site.

This sequence belongs to the GGGP/HepGP synthase family. Group II subfamily. It depends on Mg(2+) as a cofactor.

It localises to the cytoplasm. It catalyses the reaction sn-glycerol 1-phosphate + (2E,6E,10E)-geranylgeranyl diphosphate = sn-3-O-(geranylgeranyl)glycerol 1-phosphate + diphosphate. It functions in the pathway membrane lipid metabolism; glycerophospholipid metabolism. Functionally, prenyltransferase that catalyzes the transfer of the geranylgeranyl moiety of geranylgeranyl diphosphate (GGPP) to the C3 hydroxyl of sn-glycerol-1-phosphate (G1P). This reaction is the first ether-bond-formation step in the biosynthesis of archaeal membrane lipids. This Thermofilum pendens (strain DSM 2475 / Hrk 5) protein is Geranylgeranylglyceryl phosphate synthase.